Consider the following 183-residue polypeptide: Dual-action ribosomal maturation protein DarP (183 aa).

Belongs to the DarP family.

It is found in the cytoplasm. Functionally, member of a network of 50S ribosomal subunit biogenesis factors which assembles along the 30S-50S interface, preventing incorrect 23S rRNA structures from forming. Promotes peptidyl transferase center (PTC) maturation. The sequence is that of Dual-action ribosomal maturation protein DarP from Salmonella enteritidis PT4 (strain P125109).